The chain runs to 63 residues: Small ribosomal subunit protein eS30B (63 aa).

Positions 1–35 (MAKVHGSLARAGKVKSQTPKVEKTEKPKKPKGRAY) are disordered. A Phosphoserine modification is found at S16. T48 is subject to Phosphothreonine.

This sequence belongs to the eukaryotic ribosomal protein eS30 family. In terms of assembly, component of the small ribosomal subunit (SSU). Mature yeast ribosomes consist of a small (40S) and a large (60S) subunit. The 40S small subunit contains 1 molecule of ribosomal RNA (18S rRNA) and 33 different proteins (encoded by 57 genes). The large 60S subunit contains 3 rRNA molecules (25S, 5.8S and 5S rRNA) and 46 different proteins (encoded by 81 genes).

Its subcellular location is the cytoplasm. Component of the ribosome, a large ribonucleoprotein complex responsible for the synthesis of proteins in the cell. The small ribosomal subunit (SSU) binds messenger RNAs (mRNAs) and translates the encoded message by selecting cognate aminoacyl-transfer RNA (tRNA) molecules. The large subunit (LSU) contains the ribosomal catalytic site termed the peptidyl transferase center (PTC), which catalyzes the formation of peptide bonds, thereby polymerizing the amino acids delivered by tRNAs into a polypeptide chain. The nascent polypeptides leave the ribosome through a tunnel in the LSU and interact with protein factors that function in enzymatic processing, targeting, and the membrane insertion of nascent chains at the exit of the ribosomal tunnel. In Saccharomyces cerevisiae (strain ATCC 204508 / S288c) (Baker's yeast), this protein is Small ribosomal subunit protein eS30B.